A 25-amino-acid chain; its full sequence is Superoxide dismutase [Mn], mitochondrial (25 aa).

Position 9 (H9) interacts with Mn(2+).

It belongs to the iron/manganese superoxide dismutase family. As to quaternary structure, homotetramer. Mn(2+) serves as cofactor.

It is found in the mitochondrion matrix. It carries out the reaction 2 superoxide + 2 H(+) = H2O2 + O2. Its function is as follows. Destroys superoxide anion radicals which are normally produced within the cells and which are toxic to biological systems. In Alternaria alternata (Alternaria rot fungus), this protein is Superoxide dismutase [Mn], mitochondrial.